We begin with the raw amino-acid sequence, 395 residues long: MLVNIRIDFKIADIETMEKSYAKLDMINAELHEKLDILEEVTLKTCNRYEIYLLIDEEVNIPTTTFIVEKNDMAINHLLRLASGLESMIMGEDQILGQIKTARKNAIKNKTIGPKLEKVFTKAIHVGQTIRKNTHINEGGVSVGSGAVELIEEKYGSLKGKNVLIIGAGEMGTVVSKALLEKETNTIVVANRTYDKARQLAQELDGEAIKFDEMNNELVNIDIVISSTGAPHSIISKERIAFLPEEHLHDMIMLDLANPHDIENDVQELGVKLYNLDDLRYVTDKNKERRNKEAIKAEAIIEDETLLLKESLKQMEITPILSSLNIEAEKIRKQELDKTLHMLDLDKKSSKKVDYLTRSITDKLLYNIINNLKEAAANNDKDTIRNAKKILLEYN.

Residues 45–48 (TCNR), Ser-87, 92–94 (EDQ), and Gln-98 each bind substrate. Catalysis depends on Cys-46, which acts as the Nucleophile. 167–172 (GAGEMG) lines the NADP(+) pocket.

This sequence belongs to the glutamyl-tRNA reductase family. In terms of assembly, homodimer.

The enzyme catalyses (S)-4-amino-5-oxopentanoate + tRNA(Glu) + NADP(+) = L-glutamyl-tRNA(Glu) + NADPH + H(+). The protein operates within porphyrin-containing compound metabolism; protoporphyrin-IX biosynthesis; 5-aminolevulinate from L-glutamyl-tRNA(Glu): step 1/2. In terms of biological role, catalyzes the NADPH-dependent reduction of glutamyl-tRNA(Glu) to glutamate 1-semialdehyde (GSA). In Methanosphaera stadtmanae (strain ATCC 43021 / DSM 3091 / JCM 11832 / MCB-3), this protein is Glutamyl-tRNA reductase.